The primary structure comprises 167 residues: Large ribosomal subunit protein uL10 (167 aa).

This sequence belongs to the universal ribosomal protein uL10 family. As to quaternary structure, part of the ribosomal stalk of the 50S ribosomal subunit. The N-terminus interacts with L11 and the large rRNA to form the base of the stalk. The C-terminus forms an elongated spine to which L12 dimers bind in a sequential fashion forming a multimeric L10(L12)X complex.

Its function is as follows. Forms part of the ribosomal stalk, playing a central role in the interaction of the ribosome with GTP-bound translation factors. The chain is Large ribosomal subunit protein uL10 from Erwinia tasmaniensis (strain DSM 17950 / CFBP 7177 / CIP 109463 / NCPPB 4357 / Et1/99).